A 1139-amino-acid polypeptide reads, in one-letter code: Dual 3',5'-cyclic-AMP and -GMP phosphodiesterase beta (1139 aa).

2 disordered regions span residues Met1–Lys42 and Gly154–Asn177. Topologically, residues Met1–Arg429 are cytoplasmic. Over residues Glu9–Val22 the composition is skewed to basic and acidic residues. A compositionally biased stretch (polar residues) spans Asn29–Lys42. Residues Met430 to Trp450 form a helical membrane-spanning segment. Over Ser451 to Tyr462 the chain is Extracellular. The chain crosses the membrane as a helical span at residues Ile463 to Ile483. Over Ile484–Tyr498 the chain is Cytoplasmic. A helical transmembrane segment spans residues Val499–Leu519. At Glu520 to Glu536 the chain is on the extracellular side. N-linked (GlcNAc...) asparagine glycosylation is present at Asn524. The helical transmembrane segment at Met537 to Phe557 threads the bilayer. Residues Pro558–Asn564 lie on the Cytoplasmic side of the membrane. The chain crosses the membrane as a helical span at residues Trp565–Ala585. Topologically, residues Lys586–Glu592 are extracellular. A helical transmembrane segment spans residues Ile593–Ser613. Residues Tyr614–Asp1139 lie on the Cytoplasmic side of the membrane. One can recognise a PDEase domain in the interval Ile775–Glu1098. Catalysis depends on His847, which acts as the Proton donor. Residue His847–His851 participates in a nucleoside 3',5'-cyclic phosphate binding. His851, His887, Asp888, and Asp1000 together coordinate a divalent metal cation. Positions 888, 1000, and 1052 each coordinate a nucleoside 3',5'-cyclic phosphate.

This sequence belongs to the cyclic nucleotide phosphodiesterase family. It depends on a divalent metal cation as a cofactor.

It is found in the cell membrane. It localises to the endoplasmic reticulum membrane. It carries out the reaction 3',5'-cyclic GMP + H2O = GMP + H(+). It catalyses the reaction 3',5'-cyclic AMP + H2O = AMP + H(+). Its pathway is purine metabolism; 3',5'-cyclic GMP degradation; GMP from 3',5'-cyclic GMP: step 1/1. The protein operates within purine metabolism; 3',5'-cyclic AMP degradation; AMP from 3',5'-cyclic AMP: step 1/1. Functionally, plays a role in signal transduction by regulating the intracellular concentration of cyclic nucleotides cAMP and cGMP. Catalyzes the hydrolysis of both cAMP and cGMP to 5'-AMP and 5'-GMP, respectively. By regulating cAMP levels during the asexual blood stage and, thus PKA activation, required for merozoite invasion of erythrocytes and for the parasite development immediately following invasion. The chain is Dual 3',5'-cyclic-AMP and -GMP phosphodiesterase beta from Plasmodium falciparum (isolate 3D7).